Reading from the N-terminus, the 1528-residue chain is Multidrug resistance-associated protein 1 (1528 aa).

The Extracellular portion of the chain corresponds to 1–33 (MALRSFCSADGSDPLWDWNVTWHTSNPDFTKCF). A glycan (N-linked (GlcNAc...) asparagine) is linked at Asn19. Residues 34-54 (QNTVLTWVPCFYLWSCFPLYF) form a helical membrane-spanning segment. The Cytoplasmic portion of the chain corresponds to 55-74 (FYLSRHDRGYIQMTHLNKTK). The chain crosses the membrane as a helical span at residues 75–95 (TALGFFLWIICWADLFYSFWE). The Extracellular segment spans residues 96–100 (RSQGV). The helical transmembrane segment at 101–121 (LRAPVLLVSPTLLGITMLLAT) threads the bilayer. Residues 122 to 133 (FLIQLERRKGVQ) are Cytoplasmic-facing. The helical transmembrane segment at 134-154 (SSGIMLTFWLVALLCALAILR) threads the bilayer. The Extracellular portion of the chain corresponds to 155–172 (SKIISALKKDAHVDVFRD). Residues 173-193 (STFYLYFTLVLVQLVLSCFSD) form a helical membrane-spanning segment. Residues 194–317 (CSPLFSETVH…KDREPSLFKV (124 aa)) lie on the Cytoplasmic side of the membrane. The residue at position 277 (Tyr277) is a Phosphotyrosine. Phosphoserine is present on Ser290. A helical transmembrane segment spans residues 318–338 (LYKTFGPYFLMSFLYKALHDL). An ABC transmembrane type-1 1 domain is found at 326–609 (FLMSFLYKAL…LPMVISSIVQ (284 aa)). Over 339-364 (MMFAGPKILELIINFVNDREAPDWQG) the chain is Extracellular. Residues 365–385 (YFYTALLFVSACLQTLALHQY) form a helical membrane-spanning segment. The Cytoplasmic portion of the chain corresponds to 386-441 (FHICFVSGMRIKTAVVGAVYRKALLITNAARKSSTVGEIVNLMSVDAQRFMDLATY). Residues 442 to 462 (INMIWSAPLQVILALYFLWLS) form a helical membrane-spanning segment. Over 463–465 (LGP) the chain is Extracellular. Residues 466 to 486 (SVLAGVAVMILMVPLNAVMAM) form a helical membrane-spanning segment. The Cytoplasmic segment spans residues 487–548 (KTKTYQVAHM…VLKKSAYLAA (62 aa)). Lys504 is subject to N6-succinyllysine. The helical transmembrane segment at 549-569 (VGTFTWVCTPFLVALSTFAVF) threads the bilayer. At 570 to 591 (VTVDERNILDAKKAFVSLALFN) the chain is on the extracellular side. Residues 592 to 612 (ILRFPLNILPMVISSIVQASV) form a helical membrane-spanning segment. Topologically, residues 613–963 (SLKRLRIFLS…VQLSVYWNYM (351 aa)) are cytoplasmic. In terms of domain architecture, ABC transporter 1 spans 644–868 (ITVKNATFTW…DGAFAEFLRT (225 aa)). 678 to 685 (GQVGCGKS) serves as a coordination point for ATP. Disordered regions lie at residues 876–895 (LASE…PVEN) and 909–929 (RHLS…SSIA). Ser878, Ser882, Ser912, and Ser927 each carry phosphoserine. Residues 910–929 (HLSNSSSHSGDTSQQHSSIA) show a composition bias toward polar residues. The chain crosses the membrane as a helical span at residues 964 to 984 (KAIGLFITFLSIFLFLCNHVS). The region spanning 971 to 1253 (TFLSIFLFLC…LVRMSSEMET (283 aa)) is the ABC transmembrane type-1 2 domain. At 985–1022 (ALASNYWLSLWTDDPPVVNGTQANRNFRLSVYGALGIL) the chain is on the extracellular side. The N-linked (GlcNAc...) asparagine glycan is linked to Asn1003. A helical membrane pass occupies residues 1023-1043 (QGAAIFGYSMAVSIGGIFASR). Residues 1044-1086 (RLHLDLLYNVLRSPMSFFERTPSGNLVNRFSKELDTVDSMIPQ) lie on the Cytoplasmic side of the membrane. The chain crosses the membrane as a helical span at residues 1087–1107 (VIKMFMGSLFSVIGAVIIILL). A topological domain (extracellular) is located at residue Ala1108. Residues 1109 to 1129 (TPIAAVIIPPLGLVYFFVQRF) traverse the membrane as a helical segment. The Cytoplasmic segment spans residues 1130–1200 (YVASSRQLKR…VANRWLAVRL (71 aa)). A helical membrane pass occupies residues 1201 to 1221 (ECVGNCIVLFAALFAVISRHS). Residues 1222-1223 (LS) are Extracellular-facing. A helical transmembrane segment spans residues 1224-1244 (AGLVGLSVSYSLQITAYLNWL). The Cytoplasmic segment spans residues 1245–1528 (VRMSSEMETN…YSMAKDAGLV (284 aa)). The ABC transporter 2 domain occupies 1290 to 1524 (VEFRDYCLRY…RGIFYSMAKD (235 aa)). Position 1324–1331 (1324–1331 (GRTGAGKS)) interacts with ATP.

The protein belongs to the ABC transporter superfamily. ABCC family. Conjugate transporter (TC 3.A.1.208) subfamily.

The protein localises to the cell membrane. The protein resides in the basolateral cell membrane. It catalyses the reaction ATP + H2O + xenobioticSide 1 = ADP + phosphate + xenobioticSide 2.. The enzyme catalyses an S-substituted glutathione(in) + ATP + H2O = an S-substituted glutathione(out) + ADP + phosphate + H(+). It carries out the reaction leukotriene C4(in) + ATP + H2O = leukotriene C4(out) + ADP + phosphate + H(+). The catalysed reaction is sphing-4-enine 1-phosphate(in) + ATP + H2O = sphing-4-enine 1-phosphate(out) + ADP + phosphate + H(+). It catalyses the reaction 17beta-estradiol 17-O-(beta-D-glucuronate)(in) + ATP + H2O = 17beta-estradiol 17-O-(beta-D-glucuronate)(out) + ADP + phosphate + H(+). The enzyme catalyses vincristine(in) + ATP + H2O = vincristine(out) + ADP + phosphate + H(+). It carries out the reaction daunorubicin(in) + ATP + H2O = daunorubicin(out) + ADP + phosphate + H(+). The catalysed reaction is 2',3'-cGAMP(in) + ATP + H2O = 2',3'-cGAMP(out) + ADP + phosphate + H(+). It catalyses the reaction S-[(2E,6E,10E)-geranylgeranyl]-L-glutathione(in) + ATP + H2O = S-[(2E,6E,10E)-geranylgeranyl]-L-glutathione(out) + ADP + phosphate + H(+). The enzyme catalyses prostaglandin A2-S-(R)-glutathione(in) + ATP + H2O = prostaglandin A2-S-(R)-glutathione(out) + ADP + phosphate + H(+). It carries out the reaction prostaglandin A2-S-(S)-glutathione(in) + ATP + H2O = prostaglandin A2-S-(S)-glutathione(out) + ADP + phosphate + H(+). Its activity is regulated as follows. MK 571 inhibits sphingosine 1-phosphate and leukotriene C4 export. In terms of biological role, mediates export of organic anions and drugs from the cytoplasm. Mediates ATP-dependent transport of glutathione and glutathione conjugates, leukotriene C4, estradiol-17-beta-o-glucuronide, methotrexate, antiviral drugs and other xenobiotics. Confers resistance to anticancer drugs by decreasing accumulation of drugs in cells, and by mediating ATP- and GSH-dependent drug export. Hydrolyzes ATP with low efficiency. Catalyzes the export of sphingosine 1-phosphate from mast cells independently of their degranulation. Participates in inflammatory response by allowing export of leukotriene C4 from leukotriene C4-synthesizing cells. Mediates ATP-dependent, GSH-independent cyclic GMP-AMP (cGAMP) export. Thus, by limiting intracellular cGAMP concentrations negatively regulates the cGAS-STING pathway. Exports S-geranylgeranyl-glutathione (GGG) in lymphoid cells and stromal compartments of lymphoid organs. ABCC1 (via extracellular transport) with GGT5 (via GGG catabolism) establish GGG gradients within lymphoid tissues to position P2RY8-positive lymphocytes at germinal centers in lymphoid follicles and restrict their chemotactic transmigration from blood vessels to the bone marrow parenchyma. Mediates basolateral export of GSH-conjugated R- and S-prostaglandin A2 diastereomers in polarized epithelial cells. The protein is Multidrug resistance-associated protein 1 of Mus musculus (Mouse).